The chain runs to 344 residues: MAP3K12-binding inhibitory protein 1 (344 aa).

S91 is modified (phosphoserine). Residues K94, K118, K129, K139, K153, and K235 each participate in a glycyl lysine isopeptide (Lys-Gly) (interchain with G-Cter in SUMO2) cross-link. Positions 172-344 are interaction with MAP3K12; sequence AEINENNVRE…AESMATHHLP (173 aa). A leucine-zipper 1 region spans residues 271 to 285; it reads IYQRIKKLEDKILEL. Residue K301 is modified to N6-acetyllysine; alternate. K301 participates in a covalent cross-link: Glycyl lysine isopeptide (Lys-Gly) (interchain with G-Cter in SUMO2); alternate. Residues K304 and K325 each participate in a glycyl lysine isopeptide (Lys-Gly) (interchain with G-Cter in SUMO2) cross-link. The interval 314-329 is leucine-zipper 2; that stretch reads LAELDEKISALKQALL.

Component of the ADA2A-containing complex (ATAC), composed of KAT14, KAT2A, TADA2L, TADA3L, ZZ3, MBIP, WDR5, YEATS2, CCDC101 and DR1. In the complex, it probably interacts directly with KAT2A, KAT14 and WDR5. In terms of tissue distribution, ubiquitous. High expression seen in the heart and lung.

It localises to the nucleus. It is found in the cytoplasm. Functionally, inhibits the MAP3K12 activity to induce the activation of the JNK/SAPK pathway. Component of the ATAC complex, a complex with histone acetyltransferase activity on histones H3 and H4. In Homo sapiens (Human), this protein is MAP3K12-binding inhibitory protein 1 (MBIP).